Consider the following 397-residue polypeptide: uncharacterized protein (397 aa).

12 helical membrane-spanning segments follow: residues 10–30, 48–68, 76–96, 106–126, 141–161, 165–185, 209–229, 242–262, 274–294, 296–316, 334–354, and 363–383; these read FIIF…YAVM, GLLV…VTII, PVLL…ALAP, ILSA…ASEM, GGLT…GDVL, AVFS…MAAV, LFSF…YTFI, VGIT…NFFA, MIGV…IAIY, AAAI…PPLL, VSVS…GMIL, and LFAG…FAHL.

It belongs to the major facilitator superfamily.

It localises to the cell membrane. This is an uncharacterized protein from Bacillus subtilis (strain 168).